The following is a 155-amino-acid chain: Ribosomal RNA large subunit methyltransferase H (155 aa).

S-adenosyl-L-methionine contacts are provided by residues leucine 72, glycine 103, and 122 to 127 (LSDLTL).

Belongs to the RNA methyltransferase RlmH family. As to quaternary structure, homodimer.

Its subcellular location is the cytoplasm. It carries out the reaction pseudouridine(1915) in 23S rRNA + S-adenosyl-L-methionine = N(3)-methylpseudouridine(1915) in 23S rRNA + S-adenosyl-L-homocysteine + H(+). In terms of biological role, specifically methylates the pseudouridine at position 1915 (m3Psi1915) in 23S rRNA. This is Ribosomal RNA large subunit methyltransferase H from Verminephrobacter eiseniae (strain EF01-2).